Here is a 147-residue protein sequence, read N- to C-terminus: Sec-independent protein translocase protein TatB (147 aa).

The chain crosses the membrane as a helical span at residues 1–21; it reads MFDVSFTELMVIGVIALVVIG. Residues 67 to 147 are disordered; sequence DETARSMQTS…DKTPPTGSAT (81 aa). Residues 93 to 103 are compositionally biased toward basic and acidic residues; the sequence is AELDDTARDAS. Composition is skewed to low complexity over residues 109 to 120 and 129 to 147; these read ADAPAEPAPAVA and APPAAATPADKTPPTGSAT.

It belongs to the TatB family. The Tat system comprises two distinct complexes: a TatABC complex, containing multiple copies of TatA, TatB and TatC subunits, and a separate TatA complex, containing only TatA subunits. Substrates initially bind to the TatABC complex, which probably triggers association of the separate TatA complex to form the active translocon.

It localises to the cell inner membrane. Its function is as follows. Part of the twin-arginine translocation (Tat) system that transports large folded proteins containing a characteristic twin-arginine motif in their signal peptide across membranes. Together with TatC, TatB is part of a receptor directly interacting with Tat signal peptides. TatB may form an oligomeric binding site that transiently accommodates folded Tat precursor proteins before their translocation. The protein is Sec-independent protein translocase protein TatB of Bordetella pertussis (strain Tohama I / ATCC BAA-589 / NCTC 13251).